The following is a 400-amino-acid chain: Elongation factor Tu-B (400 aa).

Residues Lys10–Glu209 enclose the tr-type G domain. The tract at residues Gly19–Thr26 is G1. Gly19–Thr26 contacts GTP. A Mg(2+)-binding site is contributed by Thr26. Residues Gly60–Asn64 form a G2 region. Positions Asp81–Gly84 are G3. GTP-binding positions include Asp81–His85 and Asn136–Asp139. The segment at Asn136 to Asp139 is G4. Residues Ser174–Leu176 are G5.

This sequence belongs to the TRAFAC class translation factor GTPase superfamily. Classic translation factor GTPase family. EF-Tu/EF-1A subfamily. Monomer.

It localises to the cytoplasm. The enzyme catalyses GTP + H2O = GDP + phosphate + H(+). In terms of biological role, GTP hydrolase that promotes the GTP-dependent binding of aminoacyl-tRNA to the A-site of ribosomes during protein biosynthesis. This chain is Elongation factor Tu-B, found in Caldanaerobacter subterraneus subsp. tengcongensis (strain DSM 15242 / JCM 11007 / NBRC 100824 / MB4) (Thermoanaerobacter tengcongensis).